The following is a 222-amino-acid chain: Adenylate kinase (222 aa).

Residue S2 is a propeptide, removed in mature form. Residues S2 and S3 each carry the N-acetylserine modification. 16–21 (GAGKGT) lines the ATP pocket. Positions 36 to 65 (ATGDMLRSQIAKGTQLGLEAKKIMDQGGLV) are NMP. AMP is bound by residues T37, R42, 63–65 (GLV), 92–95 (GFPR), and Q99. The tract at residues 133 to 170 (GRLIHPASGRSYHKIFNPPKEDMKDDVTGEALVQRSDD) is LID. Residues R134 and 143–144 (SY) each bind ATP. AMP is bound by residues R167 and R178. Q206 serves as a coordination point for ATP.

It belongs to the adenylate kinase family. AK2 subfamily. In terms of assembly, monomer.

The protein localises to the cytoplasm. The protein resides in the cytosol. Its subcellular location is the mitochondrion intermembrane space. It catalyses the reaction AMP + ATP = 2 ADP. Its function is as follows. Catalyzes the reversible transfer of the terminal phosphate group between ATP and AMP. Plays an important role in cellular energy homeostasis and in adenine nucleotide metabolism. Adenylate kinase activity is critical for regulation of the phosphate utilization and the AMP de novo biosynthesis pathways. This chain is Adenylate kinase, found in Saccharomyces cerevisiae (strain RM11-1a) (Baker's yeast).